The chain runs to 157 residues: Siroheme decarboxylase NirG subunit (157 aa).

Belongs to the Ahb/Nir family. Forms a complex composed of NirDL, NirG and NirH. All proteins are required for the total conversion of siroheme to didecarboxysiroheme.

The catalysed reaction is siroheme + 2 H(+) = 12,18-didecarboxysiroheme + 2 CO2. The protein operates within porphyrin-containing compound metabolism. Involved in heme d1 biosynthesis. Catalyzes the decarboxylation of siroheme into didecarboxysiroheme. Siroheme is probably decarboxylated to monodecarboxysiroheme, which is in turn decarboxylated to didecarboxysiroheme. This Paracoccus pantotrophus (Thiosphaera pantotropha) protein is Siroheme decarboxylase NirG subunit.